A 632-amino-acid polypeptide reads, in one-letter code: tRNA uridine 5-carboxymethylaminomethyl modification enzyme MnmG (632 aa).

Residues 13 to 18, Val125, and Ser180 each bind FAD; that span reads GGGHAG. 273 to 287 is an NAD(+) binding site; it reads GPRYCPSIEDKVMRF. Gln370 is a binding site for FAD.

This sequence belongs to the MnmG family. As to quaternary structure, homodimer. Heterotetramer of two MnmE and two MnmG subunits. It depends on FAD as a cofactor.

The protein resides in the cytoplasm. NAD-binding protein involved in the addition of a carboxymethylaminomethyl (cmnm) group at the wobble position (U34) of certain tRNAs, forming tRNA-cmnm(5)s(2)U34. This is tRNA uridine 5-carboxymethylaminomethyl modification enzyme MnmG from Vibrio vulnificus (strain YJ016).